Here is a 166-residue protein sequence, read N- to C-terminus: MALRLEDKKAIVAEVNEAAKGALSAVVADSRGVTVGAMTTLRKTARANGVYVRVVRNTLARRAVEGTAFECLNEVFTGPTLIAFSNEHPGAAARLLKDFAKEQAKFEVKGAAFEGNFIPAADIDRLAKLPTYEEALAQLMMTMKEASAGKFVRTLAALRDQKQEAA.

This sequence belongs to the universal ribosomal protein uL10 family. As to quaternary structure, part of the ribosomal stalk of the 50S ribosomal subunit. The N-terminus interacts with L11 and the large rRNA to form the base of the stalk. The C-terminus forms an elongated spine to which L12 dimers bind in a sequential fashion forming a multimeric L10(L12)X complex.

Functionally, forms part of the ribosomal stalk, playing a central role in the interaction of the ribosome with GTP-bound translation factors. This is Large ribosomal subunit protein uL10 from Shewanella amazonensis (strain ATCC BAA-1098 / SB2B).